Reading from the N-terminus, the 765-residue chain is Protein transport protein sec23-2 (765 aa).

Cysteine 56, cysteine 60, cysteine 79, and cysteine 82 together coordinate Zn(2+). A phosphoserine mark is found at serine 565 and serine 566.

Belongs to the SEC23/SEC24 family. SEC23 subfamily. The COPII coat is composed of at least 5 proteins: the sec23/24 complex, the sec13/31 complex, and the protein sar1.

The protein localises to the cytoplasm. It localises to the cytoplasmic vesicle. It is found in the COPII-coated vesicle membrane. The protein resides in the endoplasmic reticulum membrane. Its subcellular location is the golgi apparatus membrane. Component of the coat protein complex II (COPII) which promotes the formation of transport vesicles from the endoplasmic reticulum (ER). The coat has two main functions, the physical deformation of the endoplasmic reticulum membrane into vesicles and the selection of cargo molecules. The sequence is that of Protein transport protein sec23-2 (sec232) from Schizosaccharomyces pombe (strain 972 / ATCC 24843) (Fission yeast).